A 520-amino-acid polypeptide reads, in one-letter code: GMP synthase [glutamine-hydrolyzing] (520 aa).

The Glutamine amidotransferase type-1 domain occupies 12–205 (KIIVLDYGSQ…AISICGARGD (194 aa)). Cysteine 89 functions as the Nucleophile in the catalytic mechanism. Catalysis depends on residues histidine 179 and glutamate 181. Positions 206-395 (WSMDNFIDME…LGMPEEIVWR (190 aa)) constitute a GMPS ATP-PPase domain. 233–239 (SGGVDSS) serves as a coordination point for ATP.

In terms of assembly, homodimer.

The enzyme catalyses XMP + L-glutamine + ATP + H2O = GMP + L-glutamate + AMP + diphosphate + 2 H(+). It functions in the pathway purine metabolism; GMP biosynthesis; GMP from XMP (L-Gln route): step 1/1. Functionally, catalyzes the synthesis of GMP from XMP. The chain is GMP synthase [glutamine-hydrolyzing] from Streptococcus pyogenes serotype M5 (strain Manfredo).